We begin with the raw amino-acid sequence, 1887 residues long: Protein TIC 214 (1887 aa).

6 helical membrane passes run 18-38 (IINSVVVVGLYYGFLTTFSIG), 64-84 (FITGQLMMFISIYYAPLHLAL), 87-107 (PHTITVLALPYLLFHFFWNNH), 124-144 (LSIQCVFLNNLIFQLFNHFIL), 172-192 (VGWLIGHILFMKWLGLVLVWI), and 221-241 (IFSILLFITCVYYLGRIPSPI). 3 disordered regions span residues 248-300 (EASK…EGWD), 786-805 (EEQTKREEKKEKDKKEDNKR), and 1569-1603 (LPSNKKIKNRSQETKEPPSQRERGSDIENKGNLSP). The segment covering 256-268 (VESEEERDVEIET) has biased composition (acidic residues). A coiled-coil region spans residues 775 to 816 (KEREFKILESREEQTKREEKKEKDKKEDNKRKEQARIAIEEA). Residues 1578–1597 (RSQETKEPPSQRERGSDIEN) are compositionally biased toward basic and acidic residues.

This sequence belongs to the TIC214 family. As to quaternary structure, part of the Tic complex.

The protein localises to the plastid. Its subcellular location is the chloroplast inner membrane. Functionally, involved in protein precursor import into chloroplasts. May be part of an intermediate translocation complex acting as a protein-conducting channel at the inner envelope. The chain is Protein TIC 214 from Solanum bulbocastanum (Wild potato).